A 368-amino-acid polypeptide reads, in one-letter code: Chorismate synthase (368 aa).

Residues Arg48 and Arg54 each contribute to the NADP(+) site. FMN-binding positions include 131-133, 243-244, Gly292, 307-311, and Arg333; these read RSS, NA, and KPTSS.

Belongs to the chorismate synthase family. In terms of assembly, homotetramer. Requires FMNH2 as cofactor.

The enzyme catalyses 5-O-(1-carboxyvinyl)-3-phosphoshikimate = chorismate + phosphate. Its pathway is metabolic intermediate biosynthesis; chorismate biosynthesis; chorismate from D-erythrose 4-phosphate and phosphoenolpyruvate: step 7/7. Its function is as follows. Catalyzes the anti-1,4-elimination of the C-3 phosphate and the C-6 proR hydrogen from 5-enolpyruvylshikimate-3-phosphate (EPSP) to yield chorismate, which is the branch point compound that serves as the starting substrate for the three terminal pathways of aromatic amino acid biosynthesis. This reaction introduces a second double bond into the aromatic ring system. The protein is Chorismate synthase of Nitrobacter winogradskyi (strain ATCC 25391 / DSM 10237 / CIP 104748 / NCIMB 11846 / Nb-255).